The following is a 449-amino-acid chain: UDP-N-acetylmuramate--L-alanine ligase (449 aa).

121-127 (GAHGKSS) provides a ligand contact to ATP.

This sequence belongs to the MurCDEF family.

The protein resides in the cytoplasm. It catalyses the reaction UDP-N-acetyl-alpha-D-muramate + L-alanine + ATP = UDP-N-acetyl-alpha-D-muramoyl-L-alanine + ADP + phosphate + H(+). The protein operates within cell wall biogenesis; peptidoglycan biosynthesis. Its function is as follows. Cell wall formation. This Helicobacter pylori (strain ATCC 700392 / 26695) (Campylobacter pylori) protein is UDP-N-acetylmuramate--L-alanine ligase.